A 502-amino-acid polypeptide reads, in one-letter code: MDEFQRDGKKNRSWQQCFLYPLFFREDLYAIAHDHNLDRSSSSEPTEILNSNYFSFLTVKRLIRRIRQQNDSIVLFGICDPNQFIDRNRNSYSESVLEGLTVVLEVSFAMRSKHFLEGMDGWKSIRSIHSIFPLMEDKFPHSNYISDIRVPYSIHPEILVRTFRRWIRDAPFLDLLRSILHEWRNSFSAENLQKALVAPGENMRFPLFLWNSYIYECESFLVPLLKRFYTSRSLVYGSFPDRTDFDRKIKHIFTFPVKISTKRIWWMKDSFIHYVRYGERSLIALKGTHLQVKKCRYHLFHFWQCYFHLWSQSYRVSILELSRNYSYFLGFFIRFKMKSLVVRTKMIDSLLTTDLITNELNPIAPIRSILLFLAKERFCDISGRPISRLSWTSLSDDDILDRFDRIWINLFHYYSGSINKDSLYHIKYILLLSCAKTLACKHKSTIRLVREEPGSELFTKSFSKEREFIYSSFSKTRSQRERIWNSDILQINPLANSYTINK.

Belongs to the intron maturase 2 family. MatK subfamily.

The protein resides in the plastid. Its subcellular location is the chloroplast. Its function is as follows. Usually encoded in the trnK tRNA gene intron. Probably assists in splicing its own and other chloroplast group II introns. The sequence is that of Maturase K from Cephalotaxus fortunei (Chinese plum-yew).